Consider the following 235-residue polypeptide: Golgi to ER traffic protein 1 (235 aa).

Residue Met-1 is a topological domain, lumenal. Residues 2-21 form a helical membrane-spanning segment; sequence HWAAAVAIFFIVVTKFLQYT. At 22-104 the chain is on the cytoplasmic side; that stretch reads NKYHEKWISK…AFQAHLHKLR (83 aa). Positions 68–104 form a coiled coil; it reads WTKNNRKLDSLDKEINNLKDEIQSENKAFQAHLHKLR. The helical transmembrane segment at 105–125 threads the bilayer; sequence LLALTVPFFVFKIMYGKTPVY. The Lumenal portion of the chain corresponds to 126-181; it reads KLSSSTSTLFPTFVSGVWSQGWLYVLLHPLRTISQKWHIMEGKFGASKFDDMALQS. Residues 182–198 form a helical membrane-spanning segment; sequence VSLGIWVWALMNVINGV. Over 199–235 the chain is Cytoplasmic; the sequence is EFIVKQLFLTPKMEAPASVETQEEKALDAVDDAIILD.

The protein belongs to the WRB/GET1 family. In terms of assembly, component of the Golgi to ER traffic (GET) complex, which is composed of GET1, GET2 and GET3. Within the complex, GET1 and GET2 form a heterotetramer which is stabilized by phosphatidylinositol binding and which binds to the GET3 homodimer.

The protein resides in the endoplasmic reticulum membrane. It localises to the golgi apparatus membrane. Functionally, required for the post-translational delivery of tail-anchored (TA) proteins to the endoplasmic reticulum. Together with GET2, acts as a membrane receptor for soluble GET3, which recognizes and selectively binds the transmembrane domain of TA proteins in the cytosol. The GET complex cooperates with the HDEL receptor ERD2 to mediate the ATP-dependent retrieval of resident ER proteins that contain a C-terminal H-D-E-L retention signal from the Golgi to the ER. The protein is Golgi to ER traffic protein 1 of Saccharomyces cerevisiae (strain RM11-1a) (Baker's yeast).